A 406-amino-acid chain; its full sequence is Argininosuccinate synthase (406 aa).

ATP contacts are provided by residues alanine 12–serine 20 and alanine 39. L-citrulline is bound by residues tyrosine 90 and serine 95. Position 120 (glycine 120) interacts with ATP. Threonine 122, asparagine 126, and aspartate 127 together coordinate L-aspartate. An L-citrulline-binding site is contributed by asparagine 126. Arginine 130, serine 179, serine 188, glutamate 264, and tyrosine 276 together coordinate L-citrulline.

It belongs to the argininosuccinate synthase family. Type 1 subfamily. In terms of assembly, homotetramer.

Its subcellular location is the cytoplasm. The catalysed reaction is L-citrulline + L-aspartate + ATP = 2-(N(omega)-L-arginino)succinate + AMP + diphosphate + H(+). It participates in amino-acid biosynthesis; L-arginine biosynthesis; L-arginine from L-ornithine and carbamoyl phosphate: step 2/3. The chain is Argininosuccinate synthase from Geotalea daltonii (strain DSM 22248 / JCM 15807 / FRC-32) (Geobacter daltonii).